The following is a 419-amino-acid chain: UDP-N-acetylglucosamine 1-carboxyvinyltransferase (419 aa).

Residue 22 to 23 (KN) participates in phosphoenolpyruvate binding. Arg-92 contributes to the UDP-N-acetyl-alpha-D-glucosamine binding site. Cys-116 serves as the catalytic Proton donor. 2-(S-cysteinyl)pyruvic acid O-phosphothioketal is present on Cys-116. 2 residues coordinate UDP-N-acetyl-alpha-D-glucosamine: Asp-306 and Ile-328.

Belongs to the EPSP synthase family. MurA subfamily.

It localises to the cytoplasm. The enzyme catalyses phosphoenolpyruvate + UDP-N-acetyl-alpha-D-glucosamine = UDP-N-acetyl-3-O-(1-carboxyvinyl)-alpha-D-glucosamine + phosphate. Its pathway is cell wall biogenesis; peptidoglycan biosynthesis. Its function is as follows. Cell wall formation. Adds enolpyruvyl to UDP-N-acetylglucosamine. This is UDP-N-acetylglucosamine 1-carboxyvinyltransferase from Psychromonas ingrahamii (strain DSM 17664 / CCUG 51855 / 37).